The primary structure comprises 783 residues: Aconitate hydratase, mitochondrial (783 aa).

Residues 1-25 (MITTRLARMGALAPKSRLLFGTRGM) constitute a mitochondrion transit peptide. Residues Q102 and 195–197 (DSH) each bind substrate. The [4Fe-4S] cluster site is built by C388, C451, and C454. The substrate site is built by R477 and R482. A disordered region spans residues 524–555 (EFKLKAPTGDGLPSRGYDPGRDTYQAPPTDRS). Substrate is bound by residues R610 and 673 to 674 (SR).

Belongs to the aconitase/IPM isomerase family. It depends on [4Fe-4S] cluster as a cofactor.

The protein localises to the mitochondrion. It carries out the reaction citrate = D-threo-isocitrate. The enzyme catalyses (2R)-homocitrate = cis-homoaconitate + H2O. It functions in the pathway carbohydrate metabolism; tricarboxylic acid cycle; isocitrate from oxaloacetate: step 2/2. It participates in amino-acid biosynthesis; L-lysine biosynthesis via AAA pathway; L-alpha-aminoadipate from 2-oxoglutarate: step 2/5. In terms of biological role, catalyzes the isomerization of citrate to isocitrate via cis-aconitate, a step in the citric acid cycle. Also catalyzes the reversible dehydration of (R)-homocitrate to cis-homoaconitate, a step in the alpha-aminoadipate pathway for lysine biosynthesis. The chain is Aconitate hydratase, mitochondrial (acoA) from Emericella nidulans (strain FGSC A4 / ATCC 38163 / CBS 112.46 / NRRL 194 / M139) (Aspergillus nidulans).